Consider the following 446-residue polypeptide: tRNA-2-methylthio-N(6)-dimethylallyladenosine synthase (446 aa).

Residues 3-124 (KKLYIKTYGC…LPELISKVVR (122 aa)) enclose the MTTase N-terminal domain. The [4Fe-4S] cluster site is built by cysteine 12, cysteine 48, cysteine 87, cysteine 162, cysteine 166, and cysteine 169. Residues 148–380 (YPQGASAFIS…QKELSSQQLA (233 aa)) enclose the Radical SAM core domain. The region spanning 383–446 (ESCVGSTMKV…SNSLTGEIYT (64 aa)) is the TRAM domain.

It belongs to the methylthiotransferase family. MiaB subfamily. As to quaternary structure, monomer. [4Fe-4S] cluster serves as cofactor.

It is found in the cytoplasm. The enzyme catalyses N(6)-dimethylallyladenosine(37) in tRNA + (sulfur carrier)-SH + AH2 + 2 S-adenosyl-L-methionine = 2-methylsulfanyl-N(6)-dimethylallyladenosine(37) in tRNA + (sulfur carrier)-H + 5'-deoxyadenosine + L-methionine + A + S-adenosyl-L-homocysteine + 2 H(+). Catalyzes the methylthiolation of N6-(dimethylallyl)adenosine (i(6)A), leading to the formation of 2-methylthio-N6-(dimethylallyl)adenosine (ms(2)i(6)A) at position 37 in tRNAs that read codons beginning with uridine. This Rickettsia canadensis (strain McKiel) protein is tRNA-2-methylthio-N(6)-dimethylallyladenosine synthase.